The primary structure comprises 505 residues: ATP synthase subunit alpha (505 aa).

Glycine 171–threonine 178 is a binding site for ATP.

The protein belongs to the ATPase alpha/beta chains family. As to quaternary structure, F-type ATPases have 2 components, CF(1) - the catalytic core - and CF(0) - the membrane proton channel. CF(1) has five subunits: alpha(3), beta(3), gamma(1), delta(1), epsilon(1). CF(0) has three main subunits: a(1), b(2) and c(9-12). The alpha and beta chains form an alternating ring which encloses part of the gamma chain. CF(1) is attached to CF(0) by a central stalk formed by the gamma and epsilon chains, while a peripheral stalk is formed by the delta and b chains.

The protein resides in the cell inner membrane. The catalysed reaction is ATP + H2O + 4 H(+)(in) = ADP + phosphate + 5 H(+)(out). Its function is as follows. Produces ATP from ADP in the presence of a proton gradient across the membrane. The alpha chain is a regulatory subunit. The protein is ATP synthase subunit alpha of Campylobacter hominis (strain ATCC BAA-381 / DSM 21671 / CCUG 45161 / LMG 19568 / NCTC 13146 / CH001A).